Reading from the N-terminus, the 431-residue chain is Enolase (431 aa).

(2R)-2-phosphoglycerate is bound at residue glutamine 163. Glutamate 205 (proton donor) is an active-site residue. Mg(2+) is bound by residues aspartate 242, glutamate 288, and aspartate 315. (2R)-2-phosphoglycerate-binding residues include lysine 340, arginine 369, serine 370, and lysine 391. Lysine 340 functions as the Proton acceptor in the catalytic mechanism.

Belongs to the enolase family. It depends on Mg(2+) as a cofactor.

The protein localises to the cytoplasm. Its subcellular location is the secreted. It localises to the cell surface. It carries out the reaction (2R)-2-phosphoglycerate = phosphoenolpyruvate + H2O. It functions in the pathway carbohydrate degradation; glycolysis; pyruvate from D-glyceraldehyde 3-phosphate: step 4/5. Its function is as follows. Catalyzes the reversible conversion of 2-phosphoglycerate (2-PG) into phosphoenolpyruvate (PEP). It is essential for the degradation of carbohydrates via glycolysis. This is Enolase from Bacillus mycoides (strain KBAB4) (Bacillus weihenstephanensis).